Consider the following 49-residue polypeptide: Peridinin-chlorophyll a-binding protein (49 aa).

As to quaternary structure, monomer. Binds 12 peridinin and 2 chlorophyll a molecules per monomer.

Its subcellular location is the plastid. The protein localises to the chloroplast. Water-soluble antenna for capture of solar energy in the blue-green range. Peridinin is an asymmetric carotenoid. In Alexandrium cohorticula (Dinoflagellate), this protein is Peridinin-chlorophyll a-binding protein.